The following is a 273-amino-acid chain: Suppressor protein STM1 (273 aa).

Residues 1–153 (MSNPFDLLGN…PKTAQLSLQD (153 aa)) form a disordered region. Ser-2 is subject to N-acetylserine. Phosphoserine; by MTOR is present on residues Ser-32, Ser-41, and Ser-45. Lys-46 is covalently cross-linked (Glycyl lysine isopeptide (Lys-Gly) (interchain with G-Cter in ubiquitin)). A phosphoserine; by MTOR mark is found at Ser-55 and Ser-73. The residue at position 55 (Ser-55) is a Phosphoserine. Basic and acidic residues-rich tracts occupy residues 60–77 (AIRDKTAGRRNNRSKDVT), 89–104 (RATDRHSRTGKTDTKK), and 111–124 (GDDKKELSAEKEAQ). Ser-118 carries the post-translational modification Phosphoserine. Glycyl lysine isopeptide (Lys-Gly) (interchain with G-Cter in ubiquitin) cross-links involve residues Lys-121 and Lys-171. A Phosphothreonine; by MTOR modification is found at Thr-181. Residue Lys-184 forms a Glycyl lysine isopeptide (Lys-Gly) (interchain with G-Cter in ubiquitin) linkage. Thr-218 bears the Phosphothreonine; by MTOR mark. The segment at 219-273 (RKNFGDRNNNSRNNFNNRRGGRGARKGNNTANATNSANTVQKNRNIDVSNLPSLA) is disordered. 2 stretches are compositionally biased toward low complexity: residues 224-236 (DRNNNSRNNFNNR) and 244-257 (KGNNTANATNSANT). Phosphoserine is present on Ser-229. The segment covering 258-273 (VQKNRNIDVSNLPSLA) has biased composition (polar residues).

This sequence belongs to the SERBP1-HABP4 family. In terms of assembly, associates with mature 80S ribosomes. Binds to the head domain of the 40S ribosomal subunit and prevents mRNA binding by inserting its alpha-helix domain towards the mRNA entry tunnel at the decoding site, where it blocks the binding of tRNA and mRNA at the A- and P-sites. Interacts with EFT1; interaction sequesters EFT1 at the A-site of the ribosome, thereby blocking the interaction sites of the mRNA-tRNA complex, promoting ribosome stabilization and hibernation. Interacts with CDC13. Associates with the telomere-proximal Y' element. Post-translationally, phosphorylation by TORC1 upon nutrient replenishment inhibits STM1 and causes its release from dormant ribosomes.

Its subcellular location is the cytoplasm. It is found in the nucleus. The protein resides in the perinuclear region. Its function is as follows. Ribosome preservation factor that protect a small pool of nontranslating, vacant ribosomes in cells under nutrient starvation conditions. Under nutrient-limiting conditions, cells reduce ribosome biogenesis and degrade ribosomes via autophagy (ribophagy) or proteasomal degradation. To avoid excessive degradation during starvation, STM1 binds to and protects 80S ribosomes from proteasomal degradation. Under nutrient-sufficient conditions, TORC1 phosphorylates and inhibits STM1 to prevent formation of dormant 80S ribosomes. Acts as an inhibitor of mRNA translation by promoting ribosome hibernation: clamps the two ribosomal subunits, thereby preventing their dissociation, and inhibits translation by excluding mRNA-binding. Acts via its association with eEF2 (EFT1), promoting ribosome stabilization and storage in an inactive state. May also repress translation by preventing association of eEF3 (YEF3 and HEF3) with ribosomes. Binds specifically G4 quadruplex (these are four-stranded right-handed helices, stabilized by guanine base quartets) and purine motif triplex (characterized by a third, antiparallel purine-rich DNA strand located within the major groove of a homopurine stretch of duplex DNA) nucleic acid structures. These structures may be present at telomeres or in rRNAs. Acts with CDC13 to control telomere length homeostasis. Involved in the control of the apoptosis-like cell death. The chain is Suppressor protein STM1 from Saccharomyces cerevisiae (strain ATCC 204508 / S288c) (Baker's yeast).